A 432-amino-acid polypeptide reads, in one-letter code: Adenosylhomocysteinase (432 aa).

The substrate site is built by threonine 56, aspartate 131, and glutamate 156. Residue 157-159 participates in NAD(+) binding; it reads TTT. Residues lysine 186 and aspartate 190 each contribute to the substrate site. Residues 222–227, glutamate 243, asparagine 248, 299–301, asparagine 346, histidine 353, lysine 426, 426–430, and tyrosine 430 contribute to the NAD(+) site; these read GDVGKG, IGH, and KPDHY.

This sequence belongs to the adenosylhomocysteinase family. As to quaternary structure, interacts with AhcyL1; the interaction may negatively regulate Ahcy catalytic activity. Requires NAD(+) as cofactor.

The enzyme catalyses S-adenosyl-L-homocysteine + H2O = L-homocysteine + adenosine. Its pathway is amino-acid biosynthesis; L-homocysteine biosynthesis; L-homocysteine from S-adenosyl-L-homocysteine: step 1/1. In terms of biological role, adenosylhomocysteine is a competitive inhibitor of S-adenosyl-L-methionine-dependent methyl transferase reactions; therefore adenosylhomocysteinase may play a key role in the control of methylations via regulation of the intracellular concentration of adenosylhomocysteine. The polypeptide is Adenosylhomocysteinase (Drosophila melanogaster (Fruit fly)).